The primary structure comprises 306 residues: ATP-dependent (S)-NAD(P)H-hydrate dehydratase (306 aa).

The region spanning Leu-4 to Leu-300 is the YjeF C-terminal domain. (6S)-NADPHX-binding positions include Gly-104 and Asn-157–Ser-163. ATP-binding positions include Lys-197 to Asp-201 and Gly-216 to Gly-225. Asp-226 is a (6S)-NADPHX binding site.

Belongs to the NnrD/CARKD family. Mg(2+) is required as a cofactor.

The catalysed reaction is (6S)-NADHX + ATP = ADP + phosphate + NADH + H(+). It catalyses the reaction (6S)-NADPHX + ATP = ADP + phosphate + NADPH + H(+). Its function is as follows. Catalyzes the dehydration of the S-form of NAD(P)HX at the expense of ATP, which is converted to ADP. Together with NAD(P)HX epimerase, which catalyzes the epimerization of the S- and R-forms, the enzyme allows the repair of both epimers of NAD(P)HX, a damaged form of NAD(P)H that is a result of enzymatic or heat-dependent hydration. This Dictyostelium discoideum (Social amoeba) protein is ATP-dependent (S)-NAD(P)H-hydrate dehydratase.